The chain runs to 163 residues: 3-hydroxyacyl-[acyl-carrier-protein] dehydratase FabZ (163 aa).

The active site involves H61.

This sequence belongs to the thioester dehydratase family. FabZ subfamily.

It localises to the cytoplasm. It catalyses the reaction a (3R)-hydroxyacyl-[ACP] = a (2E)-enoyl-[ACP] + H2O. Its function is as follows. Involved in unsaturated fatty acids biosynthesis. Catalyzes the dehydration of short chain beta-hydroxyacyl-ACPs and long chain saturated and unsaturated beta-hydroxyacyl-ACPs. This Dinoroseobacter shibae (strain DSM 16493 / NCIMB 14021 / DFL 12) protein is 3-hydroxyacyl-[acyl-carrier-protein] dehydratase FabZ.